Here is a 280-residue protein sequence, read N- to C-terminus: Pantothenate synthetase (280 aa).

30 to 37 (MGALHEGH) contributes to the ATP binding site. His-37 (proton donor) is an active-site residue. (R)-pantoate is bound at residue Gln-61. Gln-61 contributes to the beta-alanine binding site. 147-150 (GQKD) is an ATP binding site. Gln-153 lines the (R)-pantoate pocket. Residues Val-176 and 184–187 (MSSR) contribute to the ATP site.

This sequence belongs to the pantothenate synthetase family. In terms of assembly, homodimer.

Its subcellular location is the cytoplasm. The enzyme catalyses (R)-pantoate + beta-alanine + ATP = (R)-pantothenate + AMP + diphosphate + H(+). It participates in cofactor biosynthesis; (R)-pantothenate biosynthesis; (R)-pantothenate from (R)-pantoate and beta-alanine: step 1/1. Its function is as follows. Catalyzes the condensation of pantoate with beta-alanine in an ATP-dependent reaction via a pantoyl-adenylate intermediate. This Thermodesulfovibrio yellowstonii (strain ATCC 51303 / DSM 11347 / YP87) protein is Pantothenate synthetase.